The sequence spans 482 residues: Chromosomal replication initiator protein DnaA (482 aa).

The tract at residues 1–71 is domain I, interacts with DnaA modulators; it reads MKQSILFERV…TGLFQAEDPE (71 aa). A domain II region spans residues 71–139; that stretch reads EILKIEVLVR…ASFGSPLFGS (69 aa). The domain III, AAA+ region stretch occupies residues 140-362; it reads PLDSRFTFDT…GAFNQLVFRR (223 aa). Positions 186, 188, 189, and 190 each coordinate ATP. The tract at residues 363–482 is domain IV, binds dsDNA; it reads SFEPNLSIER…VELLKRLINE (120 aa).

The protein belongs to the DnaA family. In terms of assembly, oligomerizes as a right-handed, spiral filament on DNA at oriC.

Its subcellular location is the cytoplasm. Functionally, plays an essential role in the initiation and regulation of chromosomal replication. ATP-DnaA binds to the origin of replication (oriC) to initiate formation of the DNA replication initiation complex once per cell cycle. Binds the DnaA box (a 9 base pair repeat at the origin) and separates the double-stranded (ds)DNA. Forms a right-handed helical filament on oriC DNA; dsDNA binds to the exterior of the filament while single-stranded (ss)DNA is stabiized in the filament's interior. The ATP-DnaA-oriC complex binds and stabilizes one strand of the AT-rich DNA unwinding element (DUE), permitting loading of DNA polymerase. After initiation quickly degrades to an ADP-DnaA complex that is not apt for DNA replication. Binds acidic phospholipids. The protein is Chromosomal replication initiator protein DnaA of Rhizobium johnstonii (strain DSM 114642 / LMG 32736 / 3841) (Rhizobium leguminosarum bv. viciae).